The primary structure comprises 183 residues: UPF0397 protein EAT1b_2102 (183 aa).

A run of 5 helical transmembrane segments spans residues 9–29 (IVAT…AAIP), 42–62 (AFLA…IGLI), 74–94 (SPWW…GLIA), 117–137 (AVVQ…LIYA), and 147–167 (GAVA…LLLV).

The protein belongs to the UPF0397 family.

Its subcellular location is the cell membrane. The polypeptide is UPF0397 protein EAT1b_2102 (Exiguobacterium sp. (strain ATCC BAA-1283 / AT1b)).